The chain runs to 93 residues: Small ribosomal subunit protein bS18 (93 aa).

Belongs to the bacterial ribosomal protein bS18 family. Part of the 30S ribosomal subunit. Forms a tight heterodimer with protein bS6.

In terms of biological role, binds as a heterodimer with protein bS6 to the central domain of the 16S rRNA, where it helps stabilize the platform of the 30S subunit. This is Small ribosomal subunit protein bS18 from Verminephrobacter eiseniae (strain EF01-2).